A 79-amino-acid chain; its full sequence is Large ribosomal subunit protein uL30 (79 aa).

Belongs to the universal ribosomal protein uL30 family. Part of the 50S ribosomal subunit.

In Anaeromyxobacter sp. (strain Fw109-5), this protein is Large ribosomal subunit protein uL30.